A 243-amino-acid chain; its full sequence is Phosphoribosyl isomerase A (243 aa).

D9 acts as the Proton acceptor in catalysis. The Proton donor role is filled by D128.

This sequence belongs to the HisA/HisF family.

Its subcellular location is the cytoplasm. It carries out the reaction 1-(5-phospho-beta-D-ribosyl)-5-[(5-phospho-beta-D-ribosylamino)methylideneamino]imidazole-4-carboxamide = 5-[(5-phospho-1-deoxy-D-ribulos-1-ylimino)methylamino]-1-(5-phospho-beta-D-ribosyl)imidazole-4-carboxamide. It catalyses the reaction N-(5-phospho-beta-D-ribosyl)anthranilate = 1-(2-carboxyphenylamino)-1-deoxy-D-ribulose 5-phosphate. Its pathway is amino-acid biosynthesis; L-histidine biosynthesis; L-histidine from 5-phospho-alpha-D-ribose 1-diphosphate: step 4/9. It participates in amino-acid biosynthesis; L-tryptophan biosynthesis; L-tryptophan from chorismate: step 3/5. In terms of biological role, involved in both the histidine and tryptophan biosynthetic pathways. This chain is Phosphoribosyl isomerase A, found in Mycolicibacterium paratuberculosis (strain ATCC BAA-968 / K-10) (Mycobacterium paratuberculosis).